The sequence spans 250 residues: Heme oxygenase 2 (250 aa).

His16 is a binding site for heme b. The interval 228 to 250 (QDRPGSTEARSTAGHPITLMVGE) is disordered.

This sequence belongs to the heme oxygenase family. As to quaternary structure, homodimer.

The catalysed reaction is heme b + 3 reduced [NADPH--hemoprotein reductase] + 3 O2 = biliverdin IXalpha + CO + Fe(2+) + 3 oxidized [NADPH--hemoprotein reductase] + 3 H2O + H(+). Its function is as follows. Catalyzes the opening of the heme ring with the release of iron. Key enzyme in the synthesis of the chromophoric part of the photosynthetic antennae. This Synechocystis sp. (strain ATCC 27184 / PCC 6803 / Kazusa) protein is Heme oxygenase 2 (pbsA2).